Consider the following 248-residue polypeptide: Ribonuclease 3 (248 aa).

The 128-residue stretch at 15 to 142 (LKAFFKQYHV…MIAALYLDLG (128 aa)) folds into the RNase III domain. Glutamate 55 lines the Mg(2+) pocket. Residue aspartate 59 is part of the active site. 2 residues coordinate Mg(2+): aspartate 128 and glutamate 131. Residue glutamate 131 is part of the active site. Positions 169-240 (DYKTELQEFL…ARDALQKLAT (72 aa)) constitute a DRBM domain.

Belongs to the ribonuclease III family. As to quaternary structure, homodimer. Mg(2+) is required as a cofactor.

It localises to the cytoplasm. The catalysed reaction is Endonucleolytic cleavage to 5'-phosphomonoester.. In terms of biological role, digests double-stranded RNA. Involved in the processing of primary rRNA transcript to yield the immediate precursors to the large and small rRNAs (23S and 16S). Processes some mRNAs, and tRNAs when they are encoded in the rRNA operon. Processes pre-crRNA and tracrRNA of type II CRISPR loci if present in the organism. The chain is Ribonuclease 3 from Spiroplasma citri.